The sequence spans 497 residues: Chlorophyllide reductase 52.5 kDa chain (497 aa).

A run of 3 helical transmembrane segments spans residues 65-82, 126-142, and 216-233; these read VATV…LSFI, AIVV…GVPL, and MVIG…GPTV.

Belongs to the BchN/ChlN family. Chlorophyllide reductase is composed of three subunits; BchX, BchY and BchZ. Forms a heterodimer of one BchY and one BchZ subunit.

It localises to the cell membrane. It carries out the reaction 3-deacetyl-3-vinylbacteriochlorophyllide a + 2 oxidized [2Fe-2S]-[ferredoxin] + ADP + phosphate = chlorophyllide a + 2 reduced [2Fe-2S]-[ferredoxin] + ATP + H2O + H(+). The catalysed reaction is bacteriochlorophyllide a + 2 oxidized [2Fe-2S]-[ferredoxin] + ADP + phosphate = 3-acetyl-3-devinylchlorophyllide a + 2 reduced [2Fe-2S]-[ferredoxin] + ATP + H2O + H(+). The enzyme catalyses 3-deacetyl-3-(1-hydroxyethyl)bacteriochlorophyllide a + 2 oxidized [2Fe-2S]-[ferredoxin] + ADP + phosphate = 3-devinyl-3-(1-hydroxyethyl)chlorophyllide a + 2 reduced [2Fe-2S]-[ferredoxin] + ATP + H2O + H(+). It participates in porphyrin-containing compound metabolism; bacteriochlorophyll biosynthesis (light-independent). In terms of biological role, converts chlorophylls (Chl) into bacteriochlorophylls (BChl) by reducing ring B of the tetrapyrrole. This Rhodobacter capsulatus (strain ATCC BAA-309 / NBRC 16581 / SB1003) protein is Chlorophyllide reductase 52.5 kDa chain (bchY).